A 133-amino-acid polypeptide reads, in one-letter code: PKCRKEFQQAQHLKACQQWLHKQAMQSGGGPSWTLDGEFDFEDDMEKQGPQQRPPLHQQYCNELQQEEPLCVCPTLRGASKAVKQQIQQQEQQQGKQQMVNRIYQTATHLPKVCNIPQVSVCPFQKTMPGPSY.

Propeptides lie at residues 31 to 49 and 131 to 133; these read PSWT…EKQG and PSY.

Belongs to the 2S seed storage albumins family. As to quaternary structure, the mature protein consists of a small and a large chain linked by disulfide bonds. Cotyledons and the axis.

Functionally, the small, basic, water-soluble napins are one of the two major kinds of storage proteins synthesized in the seed during its maturation. This Brassica napus (Rape) protein is Napin-1.